Here is a 295-residue protein sequence, read N- to C-terminus: Glycine--tRNA ligase alpha subunit (295 aa).

Belongs to the class-II aminoacyl-tRNA synthetase family. As to quaternary structure, tetramer of two alpha and two beta subunits.

The protein localises to the cytoplasm. The enzyme catalyses tRNA(Gly) + glycine + ATP = glycyl-tRNA(Gly) + AMP + diphosphate. In Thermosynechococcus vestitus (strain NIES-2133 / IAM M-273 / BP-1), this protein is Glycine--tRNA ligase alpha subunit.